Here is a 200-residue protein sequence, read N- to C-terminus: Pyrrolidone-carboxylate peptidase (200 aa).

Residues Glu78, Cys141, and His165 contribute to the active site.

The protein belongs to the peptidase C15 family. Homotetramer.

The protein resides in the cytoplasm. It carries out the reaction Release of an N-terminal pyroglutamyl group from a polypeptide, the second amino acid generally not being Pro.. Removes 5-oxoproline from various penultimate amino acid residues except L-proline. The chain is Pyrrolidone-carboxylate peptidase from Lactobacillus acidophilus (strain ATCC 700396 / NCK56 / N2 / NCFM).